We begin with the raw amino-acid sequence, 67 residues long: DNA-directed RNA polymerase subunit omega (67 aa).

The protein belongs to the RNA polymerase subunit omega family. The RNAP catalytic core consists of 2 alpha, 1 beta, 1 beta' and 1 omega subunit. When a sigma factor is associated with the core the holoenzyme is formed, which can initiate transcription.

It catalyses the reaction RNA(n) + a ribonucleoside 5'-triphosphate = RNA(n+1) + diphosphate. Functionally, promotes RNA polymerase assembly. Latches the N- and C-terminal regions of the beta' subunit thereby facilitating its interaction with the beta and alpha subunits. The sequence is that of DNA-directed RNA polymerase subunit omega from Bordetella pertussis (strain Tohama I / ATCC BAA-589 / NCTC 13251).